Reading from the N-terminus, the 919-residue chain is Chaperone protein ClpC2, chloroplastic (919 aa).

The N-terminal 54 residues, Met-1–Ser-54, are a transit peptide targeting the chloroplast. The region spanning Phe-89–Glu-231 is the Clp R domain. 2 repeat regions span residues Phe-92–Gly-157 and Phe-167–Glu-231. The tract at residues Leu-252–Pro-499 is i. Gly-297 to Thr-304 contacts ATP. The 36-residue stretch at Asp-506–Gln-541 folds into the UVR domain. Positions Val-566–Ser-757 are II. Position 640–647 (Gly-640–Ser-647) interacts with ATP.

This sequence belongs to the ClpA/ClpB family. ClpC subfamily.

The protein localises to the plastid. It localises to the chloroplast. Its function is as follows. Molecular chaperone that may interact with a ClpP-like protease involved in degradation of denatured proteins in the chloroplast. In Oryza sativa subsp. japonica (Rice), this protein is Chaperone protein ClpC2, chloroplastic (CLPC2).